Consider the following 356-residue polypeptide: GTPase Obg (356 aa).

Positions 1–159 (MKFLDEAKVY…RWIWLRMKLI (159 aa)) constitute an Obg domain. An OBG-type G domain is found at 160–327 (ADAGLVGLPN…ALRKLADVVG (168 aa)). GTP contacts are provided by residues 166-173 (GLPNAGKS), 191-195 (FTTLH), 212-215 (DIPG), 279-282 (NKID), and 308-310 (SGA). Positions 173 and 193 each coordinate Mg(2+). The disordered stretch occupies residues 327–356 (GEQPVSSKAKNAVESAATEEPWAAPVPPQG).

The protein belongs to the TRAFAC class OBG-HflX-like GTPase superfamily. OBG GTPase family. Monomer. Mg(2+) serves as cofactor.

The protein localises to the cytoplasm. Its function is as follows. An essential GTPase which binds GTP, GDP and possibly (p)ppGpp with moderate affinity, with high nucleotide exchange rates and a fairly low GTP hydrolysis rate. Plays a role in control of the cell cycle, stress response, ribosome biogenesis and in those bacteria that undergo differentiation, in morphogenesis control. In Bradyrhizobium sp. (strain ORS 278), this protein is GTPase Obg.